Here is a 100-residue protein sequence, read N- to C-terminus: Proline-rich protein 15-like protein (100 aa).

Residues 29 to 51 form a disordered region; that stretch reads YAQTEGGAEPPGPDAGDPHSDFN.

Belongs to the PRR15 family.

The protein is Proline-rich protein 15-like protein (Prr15l) of Mus musculus (Mouse).